Reading from the N-terminus, the 365-residue chain is N-acetylgalactosamine-N,N'-diacetylbacillosaminyl-diphospho-undecaprenol 4-alpha-N-acetylgalactosaminyltransferase (365 aa).

The protein belongs to the glycosyltransferase group 1 family.

Its subcellular location is the cell inner membrane. The catalysed reaction is N-acetyl-alpha-D-galactosaminyl-(1-&gt;3)-N,N'-diacetyl-alpha-D-bacillosaminyl-tri-trans,hepta-cis-undecaprenyl diphosphate + UDP-N-acetyl-alpha-D-galactosamine = N-acetyl-alpha-D-galactosaminyl-(1-&gt;4)-N-acetyl-alpha-D-galactosaminyl-(1-&gt;3)-N,N'-diacetyl-alpha-D-bacillosaminyl-tri-trans,heptacis-undecaprenyl diphosphate + UDP + H(+). Its pathway is protein modification; protein glycosylation. Its function is as follows. Adds a GalNAc residue on to the Und-PP-Bac2,4diNAc-GalNAc disaccharide in the N-linked protein glycosylation pathway. Transfers the third sugar in the heptasaccharide biosynthesis. This chain is N-acetylgalactosamine-N,N'-diacetylbacillosaminyl-diphospho-undecaprenol 4-alpha-N-acetylgalactosaminyltransferase (pglJ), found in Campylobacter jejuni subsp. jejuni serotype O:2 (strain ATCC 700819 / NCTC 11168).